A 75-amino-acid chain; its full sequence is Defensin-like protein 59 (75 aa).

The first 19 residues, 1–19 (MNITKSYVVIFFLVMLTNS), serve as a signal peptide directing secretion. Disulfide bonds link Cys-39–Cys-73, Cys-43–Cys-66, Cys-52–Cys-71, and Cys-56–Cys-72.

Belongs to the DEFL family.

The protein localises to the secreted. This Arabidopsis thaliana (Mouse-ear cress) protein is Defensin-like protein 59.